The sequence spans 501 residues: Aromatase 3 (501 aa).

Residue cysteine 435 coordinates heme.

It belongs to the cytochrome P450 family. Heme is required as a cofactor. In terms of tissue distribution, ovary.

The protein localises to the membrane. It catalyses the reaction testosterone + 3 reduced [NADPH--hemoprotein reductase] + 3 O2 = 17beta-estradiol + formate + 3 oxidized [NADPH--hemoprotein reductase] + 4 H2O + 4 H(+). The catalysed reaction is androst-4-ene-3,17-dione + 3 reduced [NADPH--hemoprotein reductase] + 3 O2 = estrone + formate + 3 oxidized [NADPH--hemoprotein reductase] + 4 H2O + 4 H(+). Its function is as follows. Catalyzes the formation of aromatic C18 estrogens from C19 androgens. The protein is Aromatase 3 (CYP19A3) of Sus scrofa (Pig).